The chain runs to 365 residues: Aminomethyltransferase (365 aa).

This sequence belongs to the GcvT family. In terms of assembly, the glycine cleavage system is composed of four proteins: P, T, L and H.

It carries out the reaction N(6)-[(R)-S(8)-aminomethyldihydrolipoyl]-L-lysyl-[protein] + (6S)-5,6,7,8-tetrahydrofolate = N(6)-[(R)-dihydrolipoyl]-L-lysyl-[protein] + (6R)-5,10-methylene-5,6,7,8-tetrahydrofolate + NH4(+). The glycine cleavage system catalyzes the degradation of glycine. The protein is Aminomethyltransferase of Geobacillus thermodenitrificans (strain NG80-2).